The primary structure comprises 189 residues: Hypoxanthine/guanine phosphoribosyltransferase (189 aa).

The protein belongs to the purine/pyrimidine phosphoribosyltransferase family. Archaeal HPRT subfamily. As to quaternary structure, homodimer.

The protein resides in the cytoplasm. The enzyme catalyses IMP + diphosphate = hypoxanthine + 5-phospho-alpha-D-ribose 1-diphosphate. It catalyses the reaction GMP + diphosphate = guanine + 5-phospho-alpha-D-ribose 1-diphosphate. It participates in purine metabolism; IMP biosynthesis via salvage pathway; IMP from hypoxanthine: step 1/1. In terms of biological role, catalyzes a salvage reaction resulting in the formation of IMP that is energically less costly than de novo synthesis. The chain is Hypoxanthine/guanine phosphoribosyltransferase from Methanosarcina mazei (strain ATCC BAA-159 / DSM 3647 / Goe1 / Go1 / JCM 11833 / OCM 88) (Methanosarcina frisia).